We begin with the raw amino-acid sequence, 442 residues long: 3-isopropylmalate dehydratase large subunit (442 aa).

[4Fe-4S] cluster contacts are provided by C347, C407, and C410.

It belongs to the aconitase/IPM isomerase family. LeuC type 1 subfamily. As to quaternary structure, heterodimer of LeuC and LeuD. Requires [4Fe-4S] cluster as cofactor.

It catalyses the reaction (2R,3S)-3-isopropylmalate = (2S)-2-isopropylmalate. It functions in the pathway amino-acid biosynthesis; L-leucine biosynthesis; L-leucine from 3-methyl-2-oxobutanoate: step 2/4. Its function is as follows. Catalyzes the isomerization between 2-isopropylmalate and 3-isopropylmalate, via the formation of 2-isopropylmaleate. The chain is 3-isopropylmalate dehydratase large subunit from Buchnera aphidicola subsp. Uroleucon helianthicola.